A 523-amino-acid polypeptide reads, in one-letter code: Beta-glucosidase 31 (523 aa).

The signal sequence occupies residues 1–22 (MTPARVVFICCVVLLAAAAAAA). Residues Gln-49, His-149, and 194–195 (NE) contribute to the a beta-D-glucoside site. The active-site Proton donor is the Glu-195. Cys-214 and Cys-223 are joined by a disulfide. A glycan (N-linked (GlcNAc...) asparagine) is linked at Asn-227. A beta-D-glucoside-binding residues include Tyr-339 and Glu-413. Residue Glu-413 is the Nucleophile of the active site. N-linked (GlcNAc...) asparagine glycosylation occurs at Asn-450. A beta-D-glucoside-binding positions include Trp-460, 467-468 (EY), and Phe-476.

Belongs to the glycosyl hydrolase 1 family.

It carries out the reaction Hydrolysis of terminal, non-reducing beta-D-glucosyl residues with release of beta-D-glucose.. In Oryza sativa subsp. japonica (Rice), this protein is Beta-glucosidase 31 (BGLU31).